The primary structure comprises 1486 residues: Chromosome partition protein MukB (1486 aa).

Residue 34–41 participates in ATP binding; the sequence is GGNGAGKS. Coiled-coil stretches lie at residues 326–418, 444–480, and 509–603; these read LEAD…QYNQ, LETF…QAYQ, and RHLA…RAPV. The tract at residues 666-783 is flexible hinge; sequence PGGSEDQRLN…EVPLFGRAAR (118 aa). Coiled coils occupy residues 835–923, 977–1115, and 1209–1266; these read EAEI…AKLE, EMLS…TAKA, and VEAI…QNVS.

Belongs to the SMC family. MukB subfamily. In terms of assembly, homodimerization via its hinge domain. Binds to DNA via its C-terminal region. Interacts, and probably forms a ternary complex, with MukE and MukF via its C-terminal region. The complex formation is stimulated by calcium or magnesium. Interacts with tubulin-related protein FtsZ.

It localises to the cytoplasm. Its subcellular location is the nucleoid. Plays a central role in chromosome condensation, segregation and cell cycle progression. Functions as a homodimer, which is essential for chromosome partition. Involved in negative DNA supercoiling in vivo, and by this means organize and compact chromosomes. May achieve or facilitate chromosome segregation by condensation DNA from both sides of a centrally located replisome during cell division. The polypeptide is Chromosome partition protein MukB (Escherichia coli O9:H4 (strain HS)).